The chain runs to 538 residues: Putative cysteine ligase BshC (538 aa).

Positions 460-484 (KINEQIELLERMLKRNVEKKHEVEL) form a coiled coil.

It belongs to the BshC family.

Functionally, involved in bacillithiol (BSH) biosynthesis. May catalyze the last step of the pathway, the addition of cysteine to glucosamine malate (GlcN-Mal) to generate BSH. This is Putative cysteine ligase BshC from Bacillus cereus (strain AH187).